A 343-amino-acid polypeptide reads, in one-letter code: S-adenosylmethionine:tRNA ribosyltransferase-isomerase (343 aa).

It belongs to the QueA family. In terms of assembly, monomer.

The protein resides in the cytoplasm. The catalysed reaction is 7-aminomethyl-7-carbaguanosine(34) in tRNA + S-adenosyl-L-methionine = epoxyqueuosine(34) in tRNA + adenine + L-methionine + 2 H(+). The protein operates within tRNA modification; tRNA-queuosine biosynthesis. Its function is as follows. Transfers and isomerizes the ribose moiety from AdoMet to the 7-aminomethyl group of 7-deazaguanine (preQ1-tRNA) to give epoxyqueuosine (oQ-tRNA). In Pelobacter propionicus (strain DSM 2379 / NBRC 103807 / OttBd1), this protein is S-adenosylmethionine:tRNA ribosyltransferase-isomerase.